A 259-amino-acid chain; its full sequence is Adenosylcobinamide-GDP ribazoletransferase (259 aa).

The next 5 helical transmembrane spans lie at 43 to 63 (LAGA…LGLG), 64 to 84 (ASSM…TGAL), 116 to 136 (FGVL…ASLV), 141 to 161 (PINV…LMVW), and 185 to 205 (TLYT…APVT).

It belongs to the CobS family. Mg(2+) serves as cofactor.

It is found in the cell inner membrane. The catalysed reaction is alpha-ribazole + adenosylcob(III)inamide-GDP = adenosylcob(III)alamin + GMP + H(+). It carries out the reaction alpha-ribazole 5'-phosphate + adenosylcob(III)inamide-GDP = adenosylcob(III)alamin 5'-phosphate + GMP + H(+). Its pathway is cofactor biosynthesis; adenosylcobalamin biosynthesis; adenosylcobalamin from cob(II)yrinate a,c-diamide: step 7/7. Functionally, joins adenosylcobinamide-GDP and alpha-ribazole to generate adenosylcobalamin (Ado-cobalamin). Also synthesizes adenosylcobalamin 5'-phosphate from adenosylcobinamide-GDP and alpha-ribazole 5'-phosphate. The polypeptide is Adenosylcobinamide-GDP ribazoletransferase (Allorhizobium ampelinum (strain ATCC BAA-846 / DSM 112012 / S4) (Agrobacterium vitis (strain S4))).